Consider the following 500-residue polypeptide: MRNTVFLLGFWSVYCYFPAGSITTLRPQGSLRDEHHKPTGVPATARPSVAFNIRTSKDPEQEGCNLSLGDSKLLENCGFNMTAKTFFIIHGWTMSGMFESWLHKLVSALQMREKDANVVVVDWLPLAHQLYTDAVNNTRVVGQRVAGMLDWLQEKEEFSLGNVHLIGYSLGAHVAGYAGNFVKGTVGRITGLDPAGPMFEGVDINRRLSPDDADFVDVLHTYTLSFGLSIGIRMPVGHIDIYPNGGDFQPGCGFNDVIGSFAYGTISEMVKCEHERAVHLFVDSLVNQDKPSFAFQCTDSSRFKRGICLSCRKNRCNNIGYNAKKMRKKRNSKMYLKTRAGMPFKVYHYQLKVHMFSYNNSGDTQPTLYITLYGSNADSQNLPLEIVEKIELNATNTFLVYTEEDLGDLLKMRLTWEGVAHSWYNLWNEFRNYLSQPSNPSRELYIRRIRVKSGETQRKVTFCTQDPTKSSISPGQELWFHKCQDGWKMKNKTSPFVNLA.

Positions 1–20 (MRNTVFLLGFWSVYCYFPAG) are cleaved as a signal peptide. Cys-64 and Cys-77 are joined by a disulfide. N-linked (GlcNAc...) asparagine glycosylation is found at Asn-65, Asn-80, and Asn-136. The active-site Nucleophile is the Ser-169. The active-site Charge relay system is the Asp-193. A disulfide bridge links Cys-252 with Cys-272. His-274 acts as the Charge relay system in catalysis. 2 cysteine pairs are disulfide-bonded: Cys-297–Cys-316 and Cys-308–Cys-311. Residue 325 to 337 (KMRKKRNSKMYLK) coordinates heparin. In terms of domain architecture, PLAT spans 347–482 (YHYQLKVHMF…SPGQELWFHK (136 aa)). N-linked (GlcNAc...) asparagine glycosylation is found at Asn-359 and Asn-393. A disulfide bridge links Cys-463 with Cys-483. A glycan (N-linked (GlcNAc...) asparagine) is linked at Asn-491.

It belongs to the AB hydrolase superfamily. Lipase family. As to quaternary structure, head to tail homodimer. In terms of tissue distribution, expressed in placenta, lung, liver, testis and spleen.

The protein resides in the secreted. The catalysed reaction is a triacylglycerol + H2O = a diacylglycerol + a fatty acid + H(+). The enzyme catalyses a 1,2-diacyl-sn-glycero-3-phosphocholine + H2O = a 2-acyl-sn-glycero-3-phosphocholine + a fatty acid + H(+). It catalyses the reaction 1,2,3-tri-(9Z-octadecenoyl)-glycerol + H2O = di-(9Z)-octadecenoylglycerol + (9Z)-octadecenoate + H(+). It carries out the reaction 1,2,3-tributanoylglycerol + H2O = dibutanoylglycerol + butanoate + H(+). The catalysed reaction is 1,2-dihexadecanoyl-sn-glycero-3-phosphocholine + H2O = hexadecanoyl-sn-glycero-3-phosphocholine + hexadecanoate + H(+). In terms of biological role, exerts both phospholipase and triglyceride lipase activities. More active as a phospholipase than a triglyceride lipase. Hydrolyzes triglycerides, both with short-chain fatty acyl groups (tributyrin) and long-chain fatty acyl groups (triolein) with similar levels of activity toward both types of substrates. Hydrolyzes high density lipoproteins (HDL) more efficiently than other lipoproteins. The protein is Endothelial lipase (Lipg) of Mus musculus (Mouse).